Reading from the N-terminus, the 245-residue chain is uncharacterized protein (245 aa).

The next 4 membrane-spanning stretches (helical) occupy residues 10-30 (FYTLFGLIWSLLVFFFLSPWY), 94-114 (TLAFLSTTFLIYFTIIFYVHI), 134-154 (VLIGSPLVSFFLSFITLFLII), and 196-216 (RGWIILMVDTILTFFATIYCW).

The protein resides in the membrane. This is an uncharacterized protein from Dictyostelium discoideum (Social amoeba).